The primary structure comprises 141 residues: Ubiquitin-like protein ATG12 (141 aa).

Residues 1–53 (MSEDSEVVLQLPSAPVGAGGESLPELSPETATPEPPSSAAVSPGTEEPPGDTK) form a disordered region. The segment covering 23 to 40 (LPELSPETATPEPPSSAA) has biased composition (low complexity). Gly-141 participates in a covalent cross-link: Glycyl lysine isopeptide (Gly-Lys) (interchain with K-? in acceptor protein).

The protein belongs to the ATG12 family. Forms a conjugate with ATG5. Part of the minor complex composed of 4 sets of ATG12-ATG5 and ATG16L1 (400 kDa); this complex interacts with ATG3 leading to disruption of ATG7 interaction and promotion of ATG8-like proteins lipidation. Forms an 800-kDa complex composed of ATG12-ATG5 and ATG16L2. Interacts with DHX58/RIG-1, IFIH1/MDA5 and MAVS/IPS-1 in monomeric form as well as in ATG12-ATG5 conjugate. The interaction with MAVS is further enhanced upon vesicular stomatitis virus (VSV) infection. Interacts with ATG3; this interaction is essential for phosphatidylethanolamine (PE)-conjugated ATG8-like proteins formation. Interacts with ATG7. Interacts with ATG10. The ATG12-ATG5 conjugate interacts with RAB33A; this interaction is bridged by ATG16L1 and promotes ATG12-ATG5-ATG16L1 complex recruitment to phagophores. Interacts with TECPR1. Interacts with SH3BGRL. The ATG12-ATG5 conjugate interacts with PDCD6IP (via the BRO1 domain); this interaction is bridged by ATG12 and promotes multiple PDCD6IP-mediated functions such as endolysosomal trafficking, macroautophagy and exosome biogenesis. In terms of processing, acetylated by EP300. Ubiquitous.

The protein localises to the cytoplasm. It localises to the preautophagosomal structure membrane. Its function is as follows. Ubiquitin-like protein involved in autophagy vesicles formation. Conjugation with ATG5 through a ubiquitin-like conjugating system involving also ATG7 as an E1-like activating enzyme and ATG10 as an E2-like conjugating enzyme, is essential for its function. The ATG12-ATG5 conjugate acts as an E3-like enzyme which is required for lipidation of ATG8 family proteins and their association to the vesicle membranes. As part of the ATG8 conjugation system with ATG5 and ATG16L1, required for recruitment of LRRK2 to stressed lysosomes and induction of LRRK2 kinase activity in response to lysosomal stress. (Microbial infection) May act as a proviral factor. In association with ATG5, negatively regulates the innate antiviral immune response by impairing the type I IFN production pathway upon vesicular stomatitis virus (VSV) infection. This Mus musculus (Mouse) protein is Ubiquitin-like protein ATG12.